The primary structure comprises 427 residues: tRNA(Ile)-lysidine synthase (427 aa).

Position 25–30 (25–30 (SGGLDS)) interacts with ATP.

It belongs to the tRNA(Ile)-lysidine synthase family.

Its subcellular location is the cytoplasm. The catalysed reaction is cytidine(34) in tRNA(Ile2) + L-lysine + ATP = lysidine(34) in tRNA(Ile2) + AMP + diphosphate + H(+). Its function is as follows. Ligates lysine onto the cytidine present at position 34 of the AUA codon-specific tRNA(Ile) that contains the anticodon CAU, in an ATP-dependent manner. Cytidine is converted to lysidine, thus changing the amino acid specificity of the tRNA from methionine to isoleucine. This is tRNA(Ile)-lysidine synthase from Histophilus somni (strain 129Pt) (Haemophilus somnus).